A 718-amino-acid chain; its full sequence is Polyribonucleotide nucleotidyltransferase (718 aa).

D497 and D503 together coordinate Mg(2+). The KH domain occupies 564-623; sequence PRLLTMKIDPEQIGLVIGPGGKTIKGITEQTGSKIDIADDGTVTIAALEAEKAEKAKQII. Positions 633–701 constitute an S1 motif domain; that stretch reads GEVYMGRVTR…AKGRLNLTRL (69 aa).

It belongs to the polyribonucleotide nucleotidyltransferase family. Mg(2+) is required as a cofactor.

The protein resides in the cytoplasm. It carries out the reaction RNA(n+1) + phosphate = RNA(n) + a ribonucleoside 5'-diphosphate. Functionally, involved in mRNA degradation. Catalyzes the phosphorolysis of single-stranded polyribonucleotides processively in the 3'- to 5'-direction. This Rippkaea orientalis (strain PCC 8801 / RF-1) (Cyanothece sp. (strain PCC 8801)) protein is Polyribonucleotide nucleotidyltransferase.